We begin with the raw amino-acid sequence, 275 residues long: Phosphate import ATP-binding protein PstB 3 (275 aa).

Residues 1–26 (MATQETDDSLISTDVQTDATERGDQP) form a disordered region. Over residues 9–18 (SLISTDVQTD) the composition is skewed to polar residues. The ABC transporter domain maps to 31-270 (VETKHLDVHY…PEDDRVEDYI (240 aa)). 63 to 70 (GPSGCGKS) contacts ATP.

It belongs to the ABC transporter superfamily. Phosphate importer (TC 3.A.1.7) family. The complex is composed of two ATP-binding proteins (PstB), two transmembrane proteins (PstC and PstA) and a solute-binding protein (PstS).

It is found in the cell membrane. The enzyme catalyses phosphate(out) + ATP + H2O = ADP + 2 phosphate(in) + H(+). Part of the ABC transporter complex PstSACB involved in phosphate import. Responsible for energy coupling to the transport system. The sequence is that of Phosphate import ATP-binding protein PstB 3 from Natronomonas pharaonis (strain ATCC 35678 / DSM 2160 / CIP 103997 / JCM 8858 / NBRC 14720 / NCIMB 2260 / Gabara) (Halobacterium pharaonis).